Consider the following 192-residue polypeptide: Crossover junction endodeoxyribonuclease RuvC (192 aa).

Residues D8, E67, and D139 contribute to the active site. Mg(2+) is bound by residues D8, E67, and D139.

It belongs to the RuvC family. As to quaternary structure, homodimer which binds Holliday junction (HJ) DNA. The HJ becomes 2-fold symmetrical on binding to RuvC with unstacked arms; it has a different conformation from HJ DNA in complex with RuvA. In the full resolvosome a probable DNA-RuvA(4)-RuvB(12)-RuvC(2) complex forms which resolves the HJ. Mg(2+) is required as a cofactor.

The protein localises to the cytoplasm. The enzyme catalyses Endonucleolytic cleavage at a junction such as a reciprocal single-stranded crossover between two homologous DNA duplexes (Holliday junction).. The RuvA-RuvB-RuvC complex processes Holliday junction (HJ) DNA during genetic recombination and DNA repair. Endonuclease that resolves HJ intermediates. Cleaves cruciform DNA by making single-stranded nicks across the HJ at symmetrical positions within the homologous arms, yielding a 5'-phosphate and a 3'-hydroxyl group; requires a central core of homology in the junction. The consensus cleavage sequence is 5'-(A/T)TT(C/G)-3'. Cleavage occurs on the 3'-side of the TT dinucleotide at the point of strand exchange. HJ branch migration catalyzed by RuvA-RuvB allows RuvC to scan DNA until it finds its consensus sequence, where it cleaves and resolves the cruciform DNA. This Haemophilus ducreyi (strain 35000HP / ATCC 700724) protein is Crossover junction endodeoxyribonuclease RuvC.